Consider the following 353-residue polypeptide: Phosphoribosylformylglycinamidine cyclo-ligase (353 aa).

This sequence belongs to the AIR synthase family.

The protein resides in the cytoplasm. The enzyme catalyses 2-formamido-N(1)-(5-O-phospho-beta-D-ribosyl)acetamidine + ATP = 5-amino-1-(5-phospho-beta-D-ribosyl)imidazole + ADP + phosphate + H(+). The protein operates within purine metabolism; IMP biosynthesis via de novo pathway; 5-amino-1-(5-phospho-D-ribosyl)imidazole from N(2)-formyl-N(1)-(5-phospho-D-ribosyl)glycinamide: step 2/2. The protein is Phosphoribosylformylglycinamidine cyclo-ligase of Methylocella silvestris (strain DSM 15510 / CIP 108128 / LMG 27833 / NCIMB 13906 / BL2).